Consider the following 136-residue polypeptide: Large ribosomal subunit protein bL21 (136 aa).

This sequence belongs to the bacterial ribosomal protein bL21 family. As to quaternary structure, part of the 50S ribosomal subunit. Contacts protein L20.

In terms of biological role, this protein binds to 23S rRNA in the presence of protein L20. The polypeptide is Large ribosomal subunit protein bL21 (Gloeothece citriformis (strain PCC 7424) (Cyanothece sp. (strain PCC 7424))).